A 358-amino-acid chain; its full sequence is Phospho-N-acetylmuramoyl-pentapeptide-transferase (358 aa).

The next 10 helical transmembrane spans lie at 26-46 (AIYA…WLID), 70-90 (GTPT…TLLW), 94-114 (TNVY…VGFV), 134-154 (MLWL…YPPF), 169-189 (ELGL…SNAV), 197-217 (GLAI…AYLA), 234-254 (AGEL…FLWF), 261-281 (VFMG…IAVI), 286-306 (IVLV…IVQV), and 335-355 (KIIV…LSTL).

It belongs to the glycosyltransferase 4 family. MraY subfamily. The cofactor is Mg(2+).

Its subcellular location is the cell inner membrane. The catalysed reaction is UDP-N-acetyl-alpha-D-muramoyl-L-alanyl-gamma-D-glutamyl-meso-2,6-diaminopimeloyl-D-alanyl-D-alanine + di-trans,octa-cis-undecaprenyl phosphate = di-trans,octa-cis-undecaprenyl diphospho-N-acetyl-alpha-D-muramoyl-L-alanyl-D-glutamyl-meso-2,6-diaminopimeloyl-D-alanyl-D-alanine + UMP. The protein operates within cell wall biogenesis; peptidoglycan biosynthesis. Catalyzes the initial step of the lipid cycle reactions in the biosynthesis of the cell wall peptidoglycan: transfers peptidoglycan precursor phospho-MurNAc-pentapeptide from UDP-MurNAc-pentapeptide onto the lipid carrier undecaprenyl phosphate, yielding undecaprenyl-pyrophosphoryl-MurNAc-pentapeptide, known as lipid I. The chain is Phospho-N-acetylmuramoyl-pentapeptide-transferase from Syntrophotalea carbinolica (strain DSM 2380 / NBRC 103641 / GraBd1) (Pelobacter carbinolicus).